The sequence spans 151 residues: Urease accessory protein UreE (151 aa).

Belongs to the UreE family.

It is found in the cytoplasm. Functionally, involved in urease metallocenter assembly. Binds nickel. Probably functions as a nickel donor during metallocenter assembly. This is Urease accessory protein UreE from Lachnoclostridium phytofermentans (strain ATCC 700394 / DSM 18823 / ISDg) (Clostridium phytofermentans).